The sequence spans 463 residues: MVAHRARRRKRASATQLYQTCKQAGTCPSDVINKIEHTTLADKILQWGSLFTFFGNLGIGTGAGSGGRAGYVPLGTRPTTVVDASPARPPIVVESVGPTDPSIVTLVEESSVVNAGASFPNFTGTAGFEVTSSSTTTPAVLDITPTTGSVHVSSTHFTNPSFVEPPVIEVPQTGEVSGHILVSTPTSGVHSYEEIPMQTFAVHGTGTEPISSTPIPGLRRIAAPRLYQRAFQQVKVTDPTFLTKPETLITVDNPVFEDADTTLTFSPSGVAPDPDFLDIVALHRPAFTTRRGGVRFSRLGTKATMRTRSGKQIGARVHYYYDVSPIAHTEEIEMQPLLSANNSFDGLYDIYANLDDEAPVSSHLSIATPSRLPTNTVPLSFSSQTTNVTIPLGKYWDVPIYSGPDIVLPTGPTTWPYAPQAPFDTTHDVVIHGSTFALWPVYFLRRRRRKHVPYFLADGGVAA.

Residues 1-12 (MVAHRARRRKRA) carry the Nuclear localization signal motif. Cysteine 21 and cysteine 27 are joined by a disulfide. The short motif at 444-452 (LRRRRRKHV) is the Nuclear localization signal element.

The protein belongs to the papillomaviridae L2 protein family. As to quaternary structure, interacts with major capsid protein L1. Interacts with E2; this interaction inhibits E2 transcriptional activity but not the DNA replication function E2. Interacts with host GADD45GIP1. Interacts with host HSPA8; this interaction is required for L2 nuclear translocation. Interacts with host importins KPNB2 and KPNB3. Forms a complex with importin alpha2-beta1 heterodimers via interaction with the importin alpha2 adapter. Interacts with host DYNLT1; this interaction is essential for virus intracellular transport during entry. Interacts (via C-terminus) with host retromer subunits VPS35 and VPS29. In terms of processing, highly phosphorylated.

The protein localises to the virion. It localises to the host nucleus. The protein resides in the host early endosome. It is found in the host Golgi apparatus. Minor protein of the capsid that localizes along the inner surface of the virion, within the central cavities beneath the L1 pentamers. Plays a role in capsid stabilization through interaction with the major capsid protein L1. Once the virion enters the host cell, L2 escorts the genomic DNA into the nucleus by promoting escape from the endosomal compartments and traffic through the host Golgi network. Mechanistically, the C-terminus of L2 possesses a cell-penetrating peptide that protudes from the host endosome, interacts with host cytoplasmic retromer cargo and thereby mediates the capsid delivery to the host trans-Golgi network. Plays a role through its interaction with host dynein in the intracellular microtubule-dependent transport of viral capsid toward the nucleus. Mediates the viral genome import into the nucleus through binding to host importins. Once within the nucleus, L2 localizes viral genomes to host PML bodies in order to activate early gene expression for establishment of infection. Later on, promotes late gene expression by interacting with the viral E2 protein and by inhibiting its transcriptional activation functions. During virion assembly, encapsidates the genome by direct interaction with the viral DNA. This Homo sapiens (Human) protein is Minor capsid protein L2.